Consider the following 613-residue polypeptide: Zinc metalloproteinase-disintegrin-like atragin (613 aa).

An N-terminal signal peptide occupies residues 1–20 (MIQALLVIICLAVFPHQGSS). Positions 21 to 191 (IILESGNVND…DESIEKTSQL (171 aa)) are excised as a propeptide. Residues 205 to 400 (KYIEFYVVVD…DRPQCILNKP (196 aa)) form the Peptidase M12B domain. Residues E208 and D292 each contribute to the Ca(2+) site. 2 cysteine pairs are disulfide-bonded: C316–C395 and C356–C379. H341, H345, and H351 together coordinate Zn(2+). Residues C395, N398, I410, N413, F415, E417, E420, and D423 each contribute to the Ca(2+) site. Residues 408–494 (PPICGNYFVE…ECPTDVFQRN (87 aa)) form the Disintegrin domain. 15 cysteine pairs are disulfide-bonded: C411-C440, C422-C435, C424-C430, C434-C457, C448-C454, C453-C479, C466-C486, C473-C505, C498-C510, C517-C567, C532-C575, C542-C577, C545-C555, C562-C601, and C595-C606. Residue N436 is glycosylated (N-linked (GlcNAc...) asparagine). The D/ECD-tripeptide motif lies at 472–474 (DCD). Ca(2+) contacts are provided by D474, L475, E477, D489, and V490. The interval 560 to 574 (VKCGRLFCKRRNSMI) is hypervariable region that may play important roles toward cell migration.

This sequence belongs to the venom metalloproteinase (M12B) family. P-III subfamily. P-IIIa sub-subfamily. In terms of assembly, monomer. Zn(2+) is required as a cofactor. In terms of tissue distribution, expressed by the venom gland.

The protein resides in the secreted. Functionally, snake venom zinc metalloproteinase that seems to inhibit cell migration. This activity is dominated by the local structure of the hyper-variable region. In Naja atra (Chinese cobra), this protein is Zinc metalloproteinase-disintegrin-like atragin.